Here is a 164-residue protein sequence, read N- to C-terminus: MKTAVYPGSFDPITKGHLNIIKRASKVCDKLIVAVLVNPEKKGLFSVDERVEMIKRVTKNHSNIEVQCFSGLLIDFMKEKKSKVIIKGLRTMSDFEYEFKMALMNNKLDPNIETVFMMTNAKYSYLSSSSVKQVAMFGGCIKDLVPDEIIPDIKKKINHKKECI.

S9 lines the substrate pocket. Residues 9-10 (SF) and H17 contribute to the ATP site. Residues K41, L73, and K87 each coordinate substrate. ATP-binding positions include 88-90 (GLR), E98, and 123-129 (YSYLSSS).

This sequence belongs to the bacterial CoaD family. As to quaternary structure, homohexamer. Requires Mg(2+) as cofactor.

It localises to the cytoplasm. The catalysed reaction is (R)-4'-phosphopantetheine + ATP + H(+) = 3'-dephospho-CoA + diphosphate. The protein operates within cofactor biosynthesis; coenzyme A biosynthesis; CoA from (R)-pantothenate: step 4/5. Reversibly transfers an adenylyl group from ATP to 4'-phosphopantetheine, yielding dephospho-CoA (dPCoA) and pyrophosphate. The chain is Phosphopantetheine adenylyltransferase from Clostridium botulinum (strain Okra / Type B1).